A 627-amino-acid polypeptide reads, in one-letter code: Coiled-coil domain-containing protein 22 (627 aa).

A sufficient for interaction with COMMD1 region spans residues 1-321 (MEEADRILIH…VADIPAASQR (321 aa)). A sufficicient and required for interaction with CCDC93 region spans residues 1 to 447 (MEEADRILIH…LQDCRELESS (447 aa)). The stretch at 321-384 (RPEQDTRAAQ…SVAEQEQALR (64 aa)) forms a coiled coil. Ser410 carries the post-translational modification Phosphoserine. Residues 448-535 (RRLVEIQELH…NSLSGKLDRT (88 aa)) adopt a coiled-coil conformation.

The protein belongs to the CCDC22 family. Component of the commander complex consisting of the CCC subcomplex and the retriever subcomplex. Component of the CCC (COMMD/CCDC22/CCDC93) subcomplex consisting of COMMD1, COMMD2, COMMD3, COMMD4, COMMD5, COMMD6, COMMD7, COMMD8, COMMD9, COMMD10, CCDC22 and CCDC93. Forms a coiled-coil heterodimer with CCDC22; this heterodimer interacts with the guanine nucleotide exchange factor DENND10; the interaction is direct. Interacts with CUL1, CUL2, CUL3, SKP1, BTRC. Interacts with SNX17 and SNX31. Interacts with CPNE1 and CPNE4.

It is found in the endosome. Its subcellular location is the cytoplasm. It localises to the cytoskeleton. The protein resides in the microtubule organizing center. The protein localises to the centrosome. Functionally, component of the commander complex that is essential for endosomal recycling of transmembrane cargos; the Commander complex is composed of composed of the CCC subcomplex and the retriever subcomplex. Component of the CCC complex, which is involved in the regulation of endosomal recycling of surface proteins, including integrins, signaling receptor and channels. Involved in regulation of NF-kappa-B signaling. Promotes ubiquitination of I-kappa-B-kinase subunit IKBKB and its subsequent proteasomal degradation leading to NF-kappa-B activation; the function may involve association with COMMD8 and a CUL1-dependent E3 ubiquitin ligase complex. May down-regulate NF-kappa-B activity via association with COMMD1 and involving a CUL2-dependent E3 ubiquitin ligase complex. Regulates the cellular localization of COMM domain-containing proteins, such as COMMD1 and COMMD10. Component of the CCC complex, which is involved in the regulation of endosomal recycling of surface proteins, including integrins, signaling receptor and channels. The CCC complex associates with SNX17, retriever and WASH complexes to prevent lysosomal degradation and promote cell surface recycling of numerous cargos such as integrins ITGA5:ITGB1. Plays a role in copper ion homeostasis. Involved in copper-dependent ATP7A trafficking between the trans-Golgi network and vesicles in the cell periphery; the function is proposed to depend on its association within the CCC complex and cooperation with the WASH complex on early endosomes. This is Coiled-coil domain-containing protein 22 from Rattus norvegicus (Rat).